A 326-amino-acid polypeptide reads, in one-letter code: Heterodimeric geranylgeranyl pyrophosphate synthase small subunit, chloroplastic (326 aa).

The transit peptide at Met1–Arg33 directs the protein to the chloroplast. Isopentenyl diphosphate-binding residues include Lys88 and His120. Residues Asp127 and Asp133 each contribute to the Mg(2+) site. Arg138 lines the dimethylallyl diphosphate pocket. Arg139 is a binding site for isopentenyl diphosphate. The dimethylallyl diphosphate site is built by Lys220 and Gln258. Residues Gly274–Tyr301 adopt a coiled-coil conformation.

Belongs to the FPP/GGPP synthase family. Part of a heterodimeric geranyl(geranyl)diphosphate synthase. Interacts with GGPPS1 or GGPPS2, but not with GGPPS9. Interacts with LIL3.1 and LIL3.2. Mg(2+) serves as cofactor. In terms of tissue distribution, expressed ubiquitously.

The protein resides in the plastid. It is found in the chloroplast thylakoid membrane. Functionally, heterodimeric geranyl(geranyl)-diphosphate (GPP) synthase small subunit. The small subunit alone is inactive in vitro while the large subunit GGPPS1 catalyzes mainly the production of geranygeranyl-diphosphate in vitro. Upon association of the two subunits, the product profile changes and the production of gerany-diphosphate is strongly increased. This chain is Heterodimeric geranylgeranyl pyrophosphate synthase small subunit, chloroplastic (GGR), found in Arabidopsis thaliana (Mouse-ear cress).